Consider the following 426-residue polypeptide: Arrestin domain-containing protein 17 (426 aa).

Over residues 320-329 (QSAGNGSLPK) the composition is skewed to polar residues. Positions 320-340 (QSAGNGSLPKSSIKDSPPKWD) are disordered. The span at 331–340 (SIKDSPPKWD) shows a compositional bias: basic and acidic residues.

The protein belongs to the arrestin family. As to quaternary structure, interacts with tax-6. In terms of processing, phosphorylated. Dephosphorylated by tax-6 in vitro. In terms of tissue distribution, expressed from the comma stage to adulthood in the nervous system, including sensory neurons and interneurons posterior to the nerve ring, dorsal and ventral nerve cords, tail ganglia and, CEP, HSN, ASK, ADL, ASH and ASJ neurons.

Involved in several behavioral responses including chemotaxis towards lysine and adaptation to repeated osmotic stress. In addition, plays a role in resuming egg-laying and locomotion after starvation. This is Arrestin domain-containing protein 17 from Caenorhabditis elegans.